Here is a 504-residue protein sequence, read N- to C-terminus: Sperm motility kinase 3A (504 aa).

In terms of domain architecture, Protein kinase spans 28 to 276 (YVMLETIGHG…VAEVMVHPWV (249 aa)). ATP is bound by residues 34–42 (IGHGGCATV) and Lys57. The active-site Proton acceptor is the Asp147. The region spanning 294 to 334 (KPDPAIVKAMGHIGFQAQDIEDSLRQRKFNQTMASYCLLKK) is the UBA domain. Disordered regions lie at residues 389–421 (VCGK…MDHT) and 441–468 (NSSE…WPRG). The segment covering 441–451 (NSSEESTQGHT) has biased composition (polar residues).

It belongs to the protein kinase superfamily. CAMK Ser/Thr protein kinase family. Smok subfamily. In terms of tissue distribution, testis-specific. Expressed in the testis from 22 days postpartum (22 dpp).

It catalyses the reaction L-seryl-[protein] + ATP = O-phospho-L-seryl-[protein] + ADP + H(+). It carries out the reaction L-threonyl-[protein] + ATP = O-phospho-L-threonyl-[protein] + ADP + H(+). Its function is as follows. May play a role in sperm motility, especially in the regulation of flagellar function. The chain is Sperm motility kinase 3A from Mus musculus (Mouse).